A 369-amino-acid polypeptide reads, in one-letter code: Beta-1,3-galactosyltransferase 9 (369 aa).

Over Met1 to Gln12 the chain is Cytoplasmic. Residues Trp13 to Val33 form a helical; Signal-anchor for type II membrane protein membrane-spanning segment. The Lumenal segment spans residues Glu34 to Asp369. Asn66, Asn96, and Asn109 each carry an N-linked (GlcNAc...) asparagine glycan.

This sequence belongs to the glycosyltransferase 31 family.

Its subcellular location is the golgi apparatus membrane. Its function is as follows. Putative glycosyltransferase that could catalyze the transfer of galactose residues from UDP-alpha-D-galactose. In Homo sapiens (Human), this protein is Beta-1,3-galactosyltransferase 9.